Consider the following 359-residue polypeptide: DNA-directed RNA polymerase RPB3-11 homolog (359 aa).

In the N-terminal section; belongs to the archaeal RpoD/eukaryotic RPB3 RNA polymerase subunit family. This sequence in the C-terminal section; belongs to the archaeal RpoL/eukaryotic RPB11/RPC19 RNA polymerase subunit family. Part of the viral DNA-directed RNA polymerase that consists of 8 polII-like subunits (RPB1, RPB2, RPB3, RPB5, RPB6, RPB7, RPB9, RPB10), a capping enzyme and a termination factor.

Its subcellular location is the host cytoplasm. It localises to the virion. Component of the DNA-directed RNA polymerase (RNAP) that catalyzes the transcription in the cytoplasm of viral DNA into RNA using the four ribonucleoside triphosphates as substrates. This Ornithodoros (relapsing fever ticks) protein is DNA-directed RNA polymerase RPB3-11 homolog.